The chain runs to 900 residues: UPF0182 protein Ppro_3567 (900 aa).

Transmembrane regions (helical) follow at residues 15 to 35 (FFPL…LLNL), 60 to 80 (GAGL…LHVA), 112 to 132 (VSML…AMKW), 174 to 194 (FIIL…GGIL), 210 to 230 (LAVL…LDSF), 257 to 277 (VLTF…WKGV), and 282 to 302 (LLAP…YPGV).

The protein belongs to the UPF0182 family.

The protein resides in the cell membrane. The polypeptide is UPF0182 protein Ppro_3567 (Pelobacter propionicus (strain DSM 2379 / NBRC 103807 / OttBd1)).